We begin with the raw amino-acid sequence, 474 residues long: Ribulose bisphosphate carboxylase/oxygenase activase, chloroplastic (474 aa).

Residues Met-1–Leu-58 constitute a chloroplast transit peptide. Position 78 is a phosphothreonine; by CK2 (Thr-78). Gly-165 to Ser-172 contacts ATP. Thr-283 is modified (phosphothreonine).

This sequence belongs to the RuBisCO activase family. Post-translationally, phosphorylated at Thr-78 by CK2.

Its subcellular location is the plastid. The protein resides in the chloroplast stroma. It localises to the chloroplast. It is found in the plastoglobule. Its function is as follows. Activation of RuBisCO (ribulose-1,5-bisphosphate carboxylase/oxygenase; EC 4.1.1.39) involves the ATP-dependent carboxylation of the epsilon-amino group of lysine leading to a carbamate structure. The chain is Ribulose bisphosphate carboxylase/oxygenase activase, chloroplastic (RCA) from Arabidopsis thaliana (Mouse-ear cress).